The chain runs to 219 residues: N-(5'-phosphoribosyl)anthranilate isomerase (219 aa).

Belongs to the TrpF family.

It catalyses the reaction N-(5-phospho-beta-D-ribosyl)anthranilate = 1-(2-carboxyphenylamino)-1-deoxy-D-ribulose 5-phosphate. It participates in amino-acid biosynthesis; L-tryptophan biosynthesis; L-tryptophan from chorismate: step 3/5. This chain is N-(5'-phosphoribosyl)anthranilate isomerase, found in Bradyrhizobium sp. (strain BTAi1 / ATCC BAA-1182).